Reading from the N-terminus, the 168-residue chain is Photosystem I assembly protein Ycf3 (168 aa).

TPR repeat units lie at residues 35–68 (AFTY…EIDP), 72–105 (SYIL…NPFL), and 120–153 (GEQA…TPGN).

This sequence belongs to the Ycf3 family.

The protein localises to the plastid. The protein resides in the chloroplast thylakoid membrane. Functionally, essential for the assembly of the photosystem I (PSI) complex. May act as a chaperone-like factor to guide the assembly of the PSI subunits. The protein is Photosystem I assembly protein Ycf3 of Phaseolus vulgaris (Kidney bean).